The sequence spans 252 residues: 5-oxoprolinase subunit A (252 aa).

Belongs to the LamB/PxpA family. In terms of assembly, forms a complex composed of PxpA, PxpB and PxpC.

The catalysed reaction is 5-oxo-L-proline + ATP + 2 H2O = L-glutamate + ADP + phosphate + H(+). In terms of biological role, catalyzes the cleavage of 5-oxoproline to form L-glutamate coupled to the hydrolysis of ATP to ADP and inorganic phosphate. The sequence is that of 5-oxoprolinase subunit A from Chloroflexus aggregans (strain MD-66 / DSM 9485).